The following is a 1303-amino-acid chain: D-lysergyl-peptide-synthetase subunit 2 (1303 aa).

Residues 256-653 (EWCRWTPSAV…CRKSTQVKLR (398 aa)) are adenylation (A) domain. Positions 793–869 (APSNDIEEAF…ELARHTKLVA (77 aa)) constitute a Carrier domain. Serine 830 carries the post-translational modification O-(pantetheine 4'-phosphoryl)serine. The interval 905–1294 (EDVYPCTPLQ…HAAPRTLIGD (390 aa)) is condensation (C) domain.

Belongs to the NRP synthetase family.

The protein operates within alkaloid biosynthesis; ergot alkaloid biosynthesis. Functionally, D-lysergyl-peptide-synthetase subunit 2; part of the gene cluster that mediates the biosynthesis of fungal ergot alkaloid. DmaW catalyzes the first step of ergot alkaloid biosynthesis by condensing dimethylallyl diphosphate (DMAP) and tryptophan to form 4-dimethylallyl-L-tryptophan. The second step is catalyzed by the methyltransferase easF that methylates 4-dimethylallyl-L-tryptophan in the presence of S-adenosyl-L-methionine, resulting in the formation of 4-dimethylallyl-L-abrine. The catalase easC and the FAD-dependent oxidoreductase easE then transform 4-dimethylallyl-L-abrine to chanoclavine-I which is further oxidized by easD in the presence of NAD(+), resulting in the formation of chanoclavine-I aldehyde. Agroclavine dehydrogenase easG then mediates the conversion of chanoclavine-I aldehyde to agroclavine via a non-enzymatic adduct reaction: the substrate is an iminium intermediate that is formed spontaneously from chanoclavine-I aldehyde in the presence of glutathione. The presence of easA is not required to complete this reaction. Further conversion of agroclavine to paspalic acid is a two-step process involving oxidation of agroclavine to elymoclavine and of elymoclavine to paspalic acid, the second step being performed by the elymoclavine oxidase cloA. Paspalic acid is then further converted to D-lysergic acid. Ergopeptines are assembled from D-lysergic acid and three different amino acids by the D-lysergyl-peptide-synthetases composed each of a monomudular and a trimodular nonribosomal peptide synthetase subunit. LpsB and lpsC encode the monomodular subunits responsible for D-lysergic acid activation and incorporation into the ergopeptine backbone. LpsA1 and A2 subunits encode the trimodular nonribosomal peptide synthetase assembling the tripeptide portion of ergopeptines. LpsA1 is responsible for formation of the major ergopeptine, ergotamine, and lpsA2 for alpha-ergocryptine, the minor ergopeptine of the total alkaloid mixture elaborated by C.purpurea. D-lysergyl-tripeptides are assembled by the nonribosomal peptide synthetases and released as N-(D-lysergyl-aminoacyl)-lactams. Cyclolization of the D-lysergyl-tripeptides is performed by the Fe(2+)/2-ketoglutarate-dependent dioxygenase easH which introduces a hydroxyl group into N-(D-lysergyl-aminoacyl)-lactam at alpha-C of the aminoacyl residue followed by spontaneous condensation with the terminal lactam carbonyl group. This chain is D-lysergyl-peptide-synthetase subunit 2, found in Claviceps purpurea (strain 20.1) (Ergot fungus).